The primary structure comprises 78 residues: MRSSVIVAVLVVVALAALLTQGQELKYQEREMVAELAQQIYRVAQAPWAAAVGPHKRNSELINSILGLPKVMNDAGRR.

Residues 1–22 form the signal peptide; it reads MRSSVIVAVLVVVALAALLTQG. At Ala-75 the chain carries Alanine amide.

Belongs to the arthropod PDH family. In terms of tissue distribution, eyestalk sinus gland.

The protein resides in the secreted. Functionally, the pigment-dispersing hormone causes the migration of the distal retinal pigment into the proximal end of the pigment chromatophore cells and thus decreases the amount of light entering the retinulas. May also function as a neurotransmitter and/or neuromodulator. This chain is Pigment-dispersing hormone 1 peptides (PDH1), found in Callinectes sapidus (Blue crab).